The following is an 841-amino-acid chain: Copper-transporting P-type ATPase (841 aa).

A run of 6 helical transmembrane segments spans residues 186–206, 218–238, 256–276, 285–305, 445–465, and 474–494; these read LWVS…PMLG, ATFI…LPFF, IGLG…APGI, GAAV…VFVG, AVFV…WAAI, and GLLA…GLAT. The 4-aspartylphosphate intermediate role is filled by aspartate 530. 2 helical membrane passes run 602-622 and 638-658; these read GIAD…DLGI and GKTV…AVAD. Residues aspartate 729 and aspartate 733 each coordinate Mg(2+). The next 2 membrane-spanning stretches (helical) occupy residues 742 to 762 and 800 to 820; these read VGIA…ITLV and VAAG…IAAA.

This sequence belongs to the cation transport ATPase (P-type) (TC 3.A.3) family. Type IB subfamily.

It localises to the cell membrane. It catalyses the reaction Cu(2+)(in) + ATP + H2O = Cu(2+)(out) + ADP + phosphate + H(+). Functionally, involved in copper efflux. This Rhizobium leguminosarum bv. viciae protein is Copper-transporting P-type ATPase (actP).